The following is a 223-amino-acid chain: MKAIIPPENLTELLERANMMAGVSLAQIAANRGITVPKNLKRDKGWVGQLIEMELGATAGSKPEQDFLHLGVELKTIPINVQGKPLETTYVCVAPLSQIEGLTWENSLVCHKLQRVLWVPVEGERQISVGARRIGTPILWQPDPDELRLLQQDWEEIMELIALGKVEKLTARHGEVLQLRPKAANSRALTQSIAENGSLKMTNPRGFYLKTAFTAMILNKAFG.

This sequence belongs to the MutH family.

The protein localises to the cytoplasm. In terms of biological role, sequence-specific endonuclease that cleaves unmethylated GATC sequences. It is involved in DNA mismatch repair. In Shewanella sp. (strain W3-18-1), this protein is DNA mismatch repair protein MutH.